A 247-amino-acid polypeptide reads, in one-letter code: RNA-free ribonuclease P (247 aa).

This sequence belongs to the HARP family.

The enzyme catalyses Endonucleolytic cleavage of RNA, removing 5'-extranucleotides from tRNA precursor.. Functionally, RNA-free RNase P that catalyzes the removal of the 5'-leader sequence from pre-tRNA to produce the mature 5'-terminus. This is RNA-free ribonuclease P from Methanosarcina mazei (strain ATCC BAA-159 / DSM 3647 / Goe1 / Go1 / JCM 11833 / OCM 88) (Methanosarcina frisia).